The chain runs to 182 residues: MIKLTQEEQKYLLDSIRIIPDFPKKGIIFRDITTLLNNKEALNFLLKHLKERYKDYNLDFIAGTESRGFIFASMICAKLNLPFVPIRKPGKLPFETFSCEYDLEYGSDKVELHKDAFKNIQNARVLLVDDLIATGGTAIASYELIQKAGAKCVEACFLINLKDLNGANKLEKLTSVYSVLEI.

This sequence belongs to the purine/pyrimidine phosphoribosyltransferase family. In terms of assembly, homodimer.

It is found in the cytoplasm. The enzyme catalyses AMP + diphosphate = 5-phospho-alpha-D-ribose 1-diphosphate + adenine. It participates in purine metabolism; AMP biosynthesis via salvage pathway; AMP from adenine: step 1/1. Its function is as follows. Catalyzes a salvage reaction resulting in the formation of AMP, that is energically less costly than de novo synthesis. The chain is Adenine phosphoribosyltransferase from Campylobacter jejuni subsp. jejuni serotype O:2 (strain ATCC 700819 / NCTC 11168).